Here is a 176-residue protein sequence, read N- to C-terminus: Peptidyl-tRNA hydrolase (176 aa).

Tyr-14 provides a ligand contact to tRNA. Catalysis depends on His-19, which acts as the Proton acceptor. 3 residues coordinate tRNA: Tyr-65, Asn-67, and Asn-113.

The protein belongs to the PTH family. As to quaternary structure, monomer.

It is found in the cytoplasm. The enzyme catalyses an N-acyl-L-alpha-aminoacyl-tRNA + H2O = an N-acyl-L-amino acid + a tRNA + H(+). Functionally, hydrolyzes ribosome-free peptidyl-tRNAs (with 1 or more amino acids incorporated), which drop off the ribosome during protein synthesis, or as a result of ribosome stalling. In terms of biological role, catalyzes the release of premature peptidyl moieties from peptidyl-tRNA molecules trapped in stalled 50S ribosomal subunits, and thus maintains levels of free tRNAs and 50S ribosomes. This chain is Peptidyl-tRNA hydrolase, found in Phytoplasma mali (strain AT).